The primary structure comprises 305 residues: UDP-3-O-acyl-N-acetylglucosamine deacetylase (305 aa).

Positions 79, 238, and 242 each coordinate Zn(2+). His265 serves as the catalytic Proton donor.

This sequence belongs to the LpxC family. The cofactor is Zn(2+).

The enzyme catalyses a UDP-3-O-[(3R)-3-hydroxyacyl]-N-acetyl-alpha-D-glucosamine + H2O = a UDP-3-O-[(3R)-3-hydroxyacyl]-alpha-D-glucosamine + acetate. It participates in glycolipid biosynthesis; lipid IV(A) biosynthesis; lipid IV(A) from (3R)-3-hydroxytetradecanoyl-[acyl-carrier-protein] and UDP-N-acetyl-alpha-D-glucosamine: step 2/6. Functionally, catalyzes the hydrolysis of UDP-3-O-myristoyl-N-acetylglucosamine to form UDP-3-O-myristoylglucosamine and acetate, the committed step in lipid A biosynthesis. This Haemophilus influenzae (strain PittEE) protein is UDP-3-O-acyl-N-acetylglucosamine deacetylase.